The primary structure comprises 392 residues: Protein NirF (392 aa).

It localises to the cytoplasm. Its function is as follows. Required for the biosynthesis of heme d1 of nitrite reductase. Could have a dehydrogenase activity yielding sirohydrochlorin from precorrin-2 or dehydrogenation of propionate side chain C17. The protein is Protein NirF (nirF) of Pseudomonas aeruginosa (strain ATCC 15692 / DSM 22644 / CIP 104116 / JCM 14847 / LMG 12228 / 1C / PRS 101 / PAO1).